The sequence spans 536 residues: MEAVNSTTSGFSSVLAGTKYANVNIPPQIDYVIEAVSNAGVWTWVFTLVALCIAYDQIAYIVRKGPIVGPAMKIPFIGPFLDSMDPRFDGYHAKWSSGPLSCVSIFHKFVVIASTRDMARKVFNSPAYVKPTVVDVAPKLLGHDNWVFLDGKAHVDFRKGLNGLFTRKALELYLPGQEEAYNTYFKHFLKMTKDAGGKPVPFMHEFREVMCAVSCRTFVGHYISDEAVTKIAEDYYLITAALELVNLPVILPYTKSWYGKKAADMVLAEFSKCAAKSKVRMAAGGEVTCIMDAWILSMIQSERWRKAEEKGEPHNVEKPSPLLRMFNDYEISQTIFTFLFASQDATSSAATWLFQVTAQRPDVLDRVREENIKIRNGDPNAPLTMDQLESLTYTRAVVRELLRWRPPVIMVPYVTKKAFPLTDDYTVPKGSMLIPTTFMALHDPEVYDNPSHFDPERYYSGDAEEKGSKNYLVFGTGPHYCLGQVYAQLNLALMIGKASVMLDWKHHATPKSEEIKVFATIFPMDDCPLTFEERKW.

The chain crosses the membrane as a helical span at residues 41 to 61 (VWTWVFTLVALCIAYDQIAYI). C481 serves as a coordination point for heme.

This sequence belongs to the cytochrome P450 family. Heme serves as cofactor.

The protein resides in the endoplasmic reticulum membrane. It catalyses the reaction 5-dehydroepisterol + NADPH + O2 + H(+) = ergosta-5,7,22,24(28)-tetraen-3beta-ol + NADP(+) + 2 H2O. The protein operates within steroid metabolism; ergosterol biosynthesis. C-22 sterol desaturase; part of the third module of ergosterol biosynthesis pathway that includes the late steps of the pathway. ERG5A and ERG5B convert 5-dehydroepisterol into ergosta-5,7,22,24(28)-tetraen-3beta-ol by forming the C-22(23) double bond in the sterol side chain. The third module or late pathway involves the ergosterol synthesis itself through consecutive reactions that mainly occur in the endoplasmic reticulum (ER) membrane. Firstly, the squalene synthase ERG9 catalyzes the condensation of 2 farnesyl pyrophosphate moieties to form squalene, which is the precursor of all steroids. Squalene synthase is crucial for balancing the incorporation of farnesyl diphosphate (FPP) into sterol and nonsterol isoprene synthesis. Secondly, squalene is converted into lanosterol by the consecutive action of the squalene epoxidase ERG1 and the lanosterol synthase ERG7. Then, the delta(24)-sterol C-methyltransferase ERG6 methylates lanosterol at C-24 to produce eburicol. Eburicol is the substrate of the sterol 14-alpha demethylase encoded by CYP51A, CYP51B and CYP51C, to yield 4,4,24-trimethyl ergosta-8,14,24(28)-trienol. CYP51B encodes the enzyme primarily responsible for sterol 14-alpha-demethylation, and plays an essential role in ascospore formation. CYP51A encodes an additional sterol 14-alpha-demethylase, induced on ergosterol depletion and responsible for the intrinsic variation in azole sensitivity. The third CYP51 isoform, CYP51C, does not encode a sterol 14-alpha-demethylase, but is required for full virulence on host wheat ears. The C-14 reductase ERG24 then reduces the C14=C15 double bond which leads to 4,4-dimethylfecosterol. A sequence of further demethylations at C-4, involving the C-4 demethylation complex containing the C-4 methylsterol oxidases ERG25, the sterol-4-alpha-carboxylate 3-dehydrogenase ERG26 and the 3-keto-steroid reductase ERG27, leads to the production of fecosterol via 4-methylfecosterol. ERG28 has a role as a scaffold to help anchor ERG25, ERG26 and ERG27 to the endoplasmic reticulum. The C-8 sterol isomerase ERG2 then catalyzes the reaction which results in unsaturation at C-7 in the B ring of sterols and thus converts fecosterol to episterol. The sterol-C5-desaturases ERG3A and ERG3BB then catalyze the introduction of a C-5 double bond in the B ring to produce 5-dehydroepisterol. The C-22 sterol desaturases ERG5A and ERG5B further convert 5-dehydroepisterol into ergosta-5,7,22,24(28)-tetraen-3beta-ol by forming the C-22(23) double bond in the sterol side chain. Finally, ergosta-5,7,22,24(28)-tetraen-3beta-ol is substrate of the C-24(28) sterol reductase ERG4 to produce ergosterol. This Gibberella zeae (strain ATCC MYA-4620 / CBS 123657 / FGSC 9075 / NRRL 31084 / PH-1) (Wheat head blight fungus) protein is C-22 sterol desaturase ERG5A.